We begin with the raw amino-acid sequence, 130 residues long: Large ribosomal subunit protein bL12 (130 aa).

This sequence belongs to the bacterial ribosomal protein bL12 family. As to quaternary structure, homodimer. Part of the ribosomal stalk of the 50S ribosomal subunit. Forms a multimeric L10(L12)X complex, where L10 forms an elongated spine to which 2 to 4 L12 dimers bind in a sequential fashion. Binds GTP-bound translation factors.

Forms part of the ribosomal stalk which helps the ribosome interact with GTP-bound translation factors. Is thus essential for accurate translation. In Mycolicibacterium gilvum (strain PYR-GCK) (Mycobacterium gilvum (strain PYR-GCK)), this protein is Large ribosomal subunit protein bL12.